The sequence spans 621 residues: Protein Rep78 (621 aa).

Residues 1–199 enclose the PV NS1-Nuc domain; that stretch reads MPGFYEIVIK…AQHLTHVSQT (199 aa). A divalent metal cation is bound by residues E83, H90, and H92. Residues 90-92 carry the RCR-2 motif; that stretch reads HMH. Y156 functions as the For nuclease activity in the catalytic mechanism. Residues 156–160 carry the RCR-3 motif; sequence YLLPK. Residues 196 to 211 are compositionally biased toward polar residues; it reads VSQTQEQNKENQNPNS. The tract at residues 196–216 is disordered; it reads VSQTQEQNKENQNPNSDAPVI. In terms of domain architecture, SF3 helicase spans 308–463; sequence DPQYAASVFL…LDHDFGKVTK (156 aa). 334–341 is an ATP binding site; it reads GPATTGKT. The segment at 489 to 520 is disordered; the sequence is GGAKKRPAPSDADISEPKRVRESVAQPSTSDA.

Hexamer when associated with the viral DNA ori sequence. Interacts with host PRKX. Interacts with host TOPORS. Interacts with host TBP and SUB1/PC4; these interactions play important roles in transcriptional regulation. The cofactor is a divalent metal cation.

Its subcellular location is the host nucleus. Its function is as follows. Plays an essential role in the initiation of viral DNA synthesis. Binds specifically to an inverted terminal repeat element (ITR) on the 3' and 5' ends of the viral DNA, where it cleaves a site specifically to generate a priming site for initiation of the synthesis of a complementary strand. Also plays a role as transcriptional regulator, DNA helicase and as key factors in site-specific integration of the viral genome. Regulates host PKA activity by interacting with host PRKX as a mechanism of interfering with helper virus propagation and promoting its own replication. Inhibits the host cell cycle G1/S, S and G2/M transitions. These arrests may provide essential cellular factors for viral DNA replication. This is Protein Rep78 (Rep78) from Adeno-associated virus 2 (isolate Srivastava/1982) (AAV-2).